Here is a 161-residue protein sequence, read N- to C-terminus: GTP-dependent dephospho-CoA kinase (161 aa).

GTP is bound by residues Asp-40, Val-41, Val-42, Asp-59, Glu-112, and Glu-135.

The protein belongs to the GTP-dependent DPCK family.

It carries out the reaction 3'-dephospho-CoA + GTP = GDP + CoA + H(+). Its pathway is cofactor biosynthesis; coenzyme A biosynthesis. Its function is as follows. Catalyzes the GTP-dependent phosphorylation of the 3'-hydroxyl group of dephosphocoenzyme A to form coenzyme A (CoA). This chain is GTP-dependent dephospho-CoA kinase, found in Methanocorpusculum labreanum (strain ATCC 43576 / DSM 4855 / Z).